The sequence spans 436 residues: Histidine--tRNA ligase (436 aa).

The protein belongs to the class-II aminoacyl-tRNA synthetase family. As to quaternary structure, homodimer.

It is found in the cytoplasm. It catalyses the reaction tRNA(His) + L-histidine + ATP = L-histidyl-tRNA(His) + AMP + diphosphate + H(+). This chain is Histidine--tRNA ligase, found in Psychrobacter sp. (strain PRwf-1).